A 464-amino-acid chain; its full sequence is tRNA(Ile2) 2-agmatinylcytidine synthetase TiaS (464 aa).

The protein belongs to the TiaS family.

The protein resides in the cytoplasm. The enzyme catalyses cytidine(34) in tRNA(Ile2) + agmatine + ATP + H2O = 2-agmatinylcytidine(34) in tRNA(Ile2) + AMP + 2 phosphate + 2 H(+). ATP-dependent agmatine transferase that catalyzes the formation of 2-agmatinylcytidine (agm2C) at the wobble position (C34) of tRNA(Ile2), converting the codon specificity from AUG to AUA. The protein is tRNA(Ile2) 2-agmatinylcytidine synthetase TiaS of Ignisphaera aggregans (strain DSM 17230 / JCM 13409 / AQ1.S1).